The chain runs to 262 residues: Small ribosomal subunit protein eS1 (262 aa).

Belongs to the eukaryotic ribosomal protein eS1 family. In terms of assembly, component of the small ribosomal subunit. Mature ribosomes consist of a small (40S) and a large (60S) subunit. The 40S subunit contains about 33 different proteins and 1 molecule of RNA (18S). The 60S subunit contains about 49 different proteins and 3 molecules of RNA (25S, 5.8S and 5S).

It localises to the cytoplasm. This Cryptosporidium hominis protein is Small ribosomal subunit protein eS1.